The sequence spans 108 residues: MVNLGLSRVDDAVAAKHPGLGEYAACQSHAFMKGVFTFVTGTGMAFGLQMFIQRKFPYPLQWSLLVAVVAGSVVSYGVTRVESEKCNNLWLFLETGQLPKDRSTDQRS.

Helical transmembrane passes span 32-52 (MKGVFTFVTGTGMAFGLQMFI) and 58-78 (YPLQWSLLVAVVAGSVVSYGV).

This sequence belongs to the TMEM141 family.

The protein localises to the membrane. The protein is Transmembrane protein 141 (TMEM141) of Homo sapiens (Human).